A 186-amino-acid polypeptide reads, in one-letter code: Thioredoxin M2, chloroplastic (186 aa).

A chloroplast-targeting transit peptide spans 1-72 (MAAFTCTSRP…RVSRLRRAVV (72 aa)). The region spanning 73–186 (CEAQETTTDI…LTSSLDKFLP (114 aa)) is the Thioredoxin domain. Residues Cys-110 and Cys-113 each act as nucleophile in the active site. Residues Cys-110 and Cys-113 are joined by a disulfide bond.

It belongs to the thioredoxin family. Plant M-type subfamily. Interacts with G6PD1 and G6PD4. Interacts with PGL3.

It is found in the plastid. Its subcellular location is the chloroplast stroma. Thiol-disulfide oxidoreductase that may participate in various redox reactions. May activate NADP-malate dehydrogenase. In Arabidopsis thaliana (Mouse-ear cress), this protein is Thioredoxin M2, chloroplastic.